Reading from the N-terminus, the 315-residue chain is Homoserine kinase (315 aa).

An ATP-binding site is contributed by 91–101 (PIGSGLGSSAS).

This sequence belongs to the GHMP kinase family. Homoserine kinase subfamily.

The protein resides in the cytoplasm. The enzyme catalyses L-homoserine + ATP = O-phospho-L-homoserine + ADP + H(+). It functions in the pathway amino-acid biosynthesis; L-threonine biosynthesis; L-threonine from L-aspartate: step 4/5. Its function is as follows. Catalyzes the ATP-dependent phosphorylation of L-homoserine to L-homoserine phosphate. This is Homoserine kinase from Buchnera aphidicola subsp. Cinara cedri (strain Cc).